A 202-amino-acid polypeptide reads, in one-letter code: Ribosome maturation factor RimP (202 aa).

The protein belongs to the RimP family.

The protein resides in the cytoplasm. Its function is as follows. Required for maturation of 30S ribosomal subunits. This chain is Ribosome maturation factor RimP, found in Paracidovorax citrulli (strain AAC00-1) (Acidovorax citrulli).